A 249-amino-acid chain; its full sequence is 2,3-bisphosphoglycerate-dependent phosphoglycerate mutase (249 aa).

Residues 8-15 (RHGESTWN), 21-22 (TG), Arg60, 87-90 (ERHY), Lys98, 114-115 (RR), and 183-184 (GN) each bind substrate. His9 serves as the catalytic Tele-phosphohistidine intermediate. Glu87 acts as the Proton donor/acceptor in catalysis.

It belongs to the phosphoglycerate mutase family. BPG-dependent PGAM subfamily. In terms of assembly, homodimer.

The catalysed reaction is (2R)-2-phosphoglycerate = (2R)-3-phosphoglycerate. It functions in the pathway carbohydrate degradation; glycolysis; pyruvate from D-glyceraldehyde 3-phosphate: step 3/5. In terms of biological role, catalyzes the interconversion of 2-phosphoglycerate and 3-phosphoglycerate. This chain is 2,3-bisphosphoglycerate-dependent phosphoglycerate mutase, found in Aromatoleum aromaticum (strain DSM 19018 / LMG 30748 / EbN1) (Azoarcus sp. (strain EbN1)).